Reading from the N-terminus, the 149-residue chain is UPF0178 protein Psyc_0274 (149 aa).

This sequence belongs to the UPF0178 family.

In Psychrobacter arcticus (strain DSM 17307 / VKM B-2377 / 273-4), this protein is UPF0178 protein Psyc_0274.